The chain runs to 136 residues: Small ribosomal subunit protein uS11c (136 aa).

This sequence belongs to the universal ribosomal protein uS11 family. Part of the 30S ribosomal subunit.

It is found in the plastid. Its subcellular location is the chloroplast. This Guizotia abyssinica (Niger) protein is Small ribosomal subunit protein uS11c.